The primary structure comprises 111 residues: Large ribosomal subunit protein uL29 (111 aa).

Residues 1-85 (MTVAKELRQK…TKKTNEAAVN (85 aa)) form a large ribosomal subunit protein uL29 region. Residues 86–111 (AWKQHLEANKAKLLKSRAKREDASKK) form a unknown region.

The protein belongs to the universal ribosomal protein uL29 family.

The polypeptide is Large ribosomal subunit protein uL29 (Mycoplasma pneumoniae (strain ATCC 29342 / M129 / Subtype 1) (Mycoplasmoides pneumoniae)).